Consider the following 662-residue polypeptide: DNA topoisomerase 4 subunit B (662 aa).

ATP contacts are provided by residues Tyr20, Asn60, Asp87, 129 to 135 (GLHGVGI), and Lys359. One can recognise a Toprim domain in the interval 439-553 (TELFIVEGDS…EGHLYLAKPP (115 aa)). Residues Glu445, Asp518, and Asp520 each coordinate Mg(2+).

This sequence belongs to the type II topoisomerase family. ParE type 1 subfamily. Heterotetramer composed of ParC and ParE. Mg(2+) is required as a cofactor. The cofactor is Mn(2+). It depends on Ca(2+) as a cofactor.

The catalysed reaction is ATP-dependent breakage, passage and rejoining of double-stranded DNA.. Functionally, topoisomerase IV is essential for chromosome segregation. It relaxes supercoiled DNA. Performs the decatenation events required during the replication of a circular DNA molecule. This is DNA topoisomerase 4 subunit B from Rickettsia conorii (strain ATCC VR-613 / Malish 7).